Consider the following 233-residue polypeptide: Large ribosomal subunit protein bL25 (233 aa).

Residues 1–23 form a disordered region; that stretch reads MATVRELKATARPKSGKGAARAE.

It belongs to the bacterial ribosomal protein bL25 family. CTC subfamily. As to quaternary structure, part of the 50S ribosomal subunit; part of the 5S rRNA/L5/L18/L25 subcomplex. Contacts the 5S rRNA. Binds to the 5S rRNA independently of L5 and L18.

Its function is as follows. This is one of the proteins that binds to the 5S RNA in the ribosome where it forms part of the central protuberance. This chain is Large ribosomal subunit protein bL25, found in Nitrobacter hamburgensis (strain DSM 10229 / NCIMB 13809 / X14).